Reading from the N-terminus, the 162-residue chain is Transcription elongation factor GreA (162 aa).

Positions 50–75 (YHAAREEQGHLESRIRQLQELLRTAK) form a coiled coil.

This sequence belongs to the GreA/GreB family.

Functionally, necessary for efficient RNA polymerase transcription elongation past template-encoded arresting sites. The arresting sites in DNA have the property of trapping a certain fraction of elongating RNA polymerases that pass through, resulting in locked ternary complexes. Cleavage of the nascent transcript by cleavage factors such as GreA or GreB allows the resumption of elongation from the new 3'terminus. GreA releases sequences of 2 to 3 nucleotides. In Saccharopolyspora erythraea (strain ATCC 11635 / DSM 40517 / JCM 4748 / NBRC 13426 / NCIMB 8594 / NRRL 2338), this protein is Transcription elongation factor GreA.